Consider the following 85-residue polypeptide: U4-theraphotoxin-Hhn1h (85 aa).

An N-terminal signal peptide occupies residues M1 to A22. Residues E23–R48 constitute a propeptide that is removed on maturation. Disulfide bonds link C52–C66, C56–C77, and C71–C82.

The protein belongs to the neurotoxin 12 (Hwtx-2) family. 02 (Hwtx-2) subfamily. Expressed by the venom gland.

It is found in the secreted. In terms of biological role, postsynaptic neurotoxin. This Cyriopagopus hainanus (Chinese bird spider) protein is U4-theraphotoxin-Hhn1h.